The chain runs to 211 residues: Thiamine-phosphate synthase (211 aa).

4-amino-2-methyl-5-(diphosphooxymethyl)pyrimidine-binding positions include 40–42 (QLR) and N72. Mg(2+)-binding residues include D73 and D92. S111 is a binding site for 4-amino-2-methyl-5-(diphosphooxymethyl)pyrimidine. 136-138 (TST) is a 2-[(2R,5Z)-2-carboxy-4-methylthiazol-5(2H)-ylidene]ethyl phosphate binding site. K139 provides a ligand contact to 4-amino-2-methyl-5-(diphosphooxymethyl)pyrimidine. 2-[(2R,5Z)-2-carboxy-4-methylthiazol-5(2H)-ylidene]ethyl phosphate contacts are provided by residues G167 and 187–188 (VS).

The protein belongs to the thiamine-phosphate synthase family. The cofactor is Mg(2+).

The catalysed reaction is 2-[(2R,5Z)-2-carboxy-4-methylthiazol-5(2H)-ylidene]ethyl phosphate + 4-amino-2-methyl-5-(diphosphooxymethyl)pyrimidine + 2 H(+) = thiamine phosphate + CO2 + diphosphate. It catalyses the reaction 2-(2-carboxy-4-methylthiazol-5-yl)ethyl phosphate + 4-amino-2-methyl-5-(diphosphooxymethyl)pyrimidine + 2 H(+) = thiamine phosphate + CO2 + diphosphate. It carries out the reaction 4-methyl-5-(2-phosphooxyethyl)-thiazole + 4-amino-2-methyl-5-(diphosphooxymethyl)pyrimidine + H(+) = thiamine phosphate + diphosphate. Its pathway is cofactor biosynthesis; thiamine diphosphate biosynthesis; thiamine phosphate from 4-amino-2-methyl-5-diphosphomethylpyrimidine and 4-methyl-5-(2-phosphoethyl)-thiazole: step 1/1. Condenses 4-methyl-5-(beta-hydroxyethyl)thiazole monophosphate (THZ-P) and 2-methyl-4-amino-5-hydroxymethyl pyrimidine pyrophosphate (HMP-PP) to form thiamine monophosphate (TMP). This is Thiamine-phosphate synthase from Laribacter hongkongensis (strain HLHK9).